Consider the following 964-residue polypeptide: Protein translocase subunit SecA (964 aa).

ATP is bound by residues Gln-86, 104-108, and Asp-494; that span reads GEGKT. Residues 846–964 are disordered; sequence ETAESADTIA…YKMCHGQNEA (119 aa). Over residues 871–882 the composition is skewed to acidic residues; the sequence is AEGEVEEEDEDT. A compositionally biased stretch (low complexity) spans 887–900; sequence AIAESAAASEAGES. 4 residues coordinate Zn(2+): Cys-947, Cys-949, Cys-958, and His-959.

It belongs to the SecA family. In terms of assembly, monomer and homodimer. Part of the essential Sec protein translocation apparatus which comprises SecA, SecYEG and auxiliary proteins SecDF. Other proteins may also be involved. It depends on Zn(2+) as a cofactor.

It is found in the cell membrane. Its subcellular location is the cytoplasm. It carries out the reaction ATP + H2O + cellular proteinSide 1 = ADP + phosphate + cellular proteinSide 2.. Its function is as follows. Part of the Sec protein translocase complex. Interacts with the SecYEG preprotein conducting channel. Has a central role in coupling the hydrolysis of ATP to the transfer of proteins into and across the cell membrane, serving as an ATP-driven molecular motor driving the stepwise translocation of polypeptide chains across the membrane. The sequence is that of Protein translocase subunit SecA from Bifidobacterium longum subsp. infantis (strain ATCC 15697 / DSM 20088 / JCM 1222 / NCTC 11817 / S12).